The sequence spans 378 residues: Stimulator of interferon genes protein (378 aa).

Over 1–17 (MPHSSLHPSIPQPRGLR) the chain is Cytoplasmic. A mediates interaction with ZDHHC1 and ZDHHC11 region spans residues 1–190 (MPHSSLHPSI…IYNQFHNNTL (190 aa)). A helical transmembrane segment spans residues 18 to 34 (AQKAALVLLSACLVALW). Topologically, residues 35-44 (GLGEPPDYTL) are lumenal. A helical membrane pass occupies residues 45 to 69 (KWLVLHLASQQMGLLIKGICSLAEE). Residues 70–91 (LCHVHSRYHGSYWRAVRACLCS) are Cytoplasmic-facing. C88 carries the S-palmitoyl cysteine lipid modification. Residues 92–106 (SMRCGALLLLSCYFY) form a helical membrane-spanning segment. The Lumenal portion of the chain corresponds to 107 to 116 (CSLPNMADLP). Residues 117-134 (FTWMLALLGLSQALNILL) traverse the membrane as a helical segment. Residues 135–378 (GLQGLAPAEV…KPLPLRSDVF (244 aa)) lie on the Cytoplasmic side of the membrane. Residue K150 forms a Glycyl lysine isopeptide (Lys-Gly) (interchain with G-Cter in ubiquitin) linkage. Residues 153–339 (FNVAHGLAWS…LQHLRQEERE (187 aa)) are cyclic dinucleotide-binding domain (CBD). Residues S162 and Y167 each contribute to the 2',3'-cGAMP site. 3',3'-c-di-GMP is bound by residues S162 and Y167. Y167 contacts 2',3'-cUAMP. Residue K236 forms a Glycyl lysine isopeptide (Lys-Gly) (interchain with G-Cter in ubiquitin) linkage. 2',3'-cGAMP-binding residues include R238 and T263. Residues R238 and T263 each contribute to the 2',3'-cUAMP site. 3',3'-c-di-GMP is bound by residues 238–241 (RVYT) and T263. Residues 339-378 (EVTMGSTETSVMPGSSVLSQEPELLISGLEKPLPLRSDVF) are C-terminal tail (CTT). S354 carries the phosphoserine modification. Residues S357 and S365 each carry the phosphoserine; by TBK1 modification. A pLxIS motif motif is present at residues 362–365 (LLIS).

The protein belongs to the STING family. In terms of assembly, homodimer; forms a homodimer in absence of cyclic nucleotide (c-di-GMP or cGAMP); 'Lys-63'-linked ubiquitination at Lys-150 is required for homodimerization. Homotetramer; in presence of cyclic nucleotide (c-di-GMP or cGAMP), forms tetramers and higher-order oligomers through side-by-side packing. Interacts (when phosphorylated) with IRF3; following activation and phosphorylation on the pLxIS motif by TBK1, recruits IRF3. Interacts with RIGI, MAVS and SSR2. Interacts with RNF5 and TRIM56. Interacts with TBK1; when homodimer, leading to subsequent production of IFN-beta. Interacts with IFIT1 and IFIT2. Interacts with TRIM29; this interaction induces STING1 ubiquitination and subsequent degradation. Associates with the MHC-II complex. Interacts with STEEP1; interaction takes place upon cGAMP-activation and STING1 phosphorylation by MAP3K7/TAK1 and promotes STING1 translocation to COPII vesicles. Interacts with SEC24A, SEC24B and SEC24C; promoting translocation to COPII vesicles. Interacts (when ubiquitinated) with SQSTM1; leading to relocalization to autophagosomes. Interacts with SURF4. Interacts with HNRNPA2B1. Interacts with ZDHHC1; ZDHHC1 constitutively interacts with STING1 and in presence of DNA viruses activates it by promoting its cGAMP-induced oligomerization and the recruitment of downstream signaling components. Interacts with ZDHHC11; in presence of DNA viruses promotes the recruitment of IRF3 to STING1. Interacts with TOMM70. Interacts with TAB1; promoting recruitment of TAB1 to the endoplasmic reticulum membrane and subsequent activation of MAP3K7/TAK1. Interacts (via transmembrane domain) with TMEM203. Interacts with DDX41. Phosphorylation by TBK1 leads to activation and production of IFN-beta. Following cyclic nucleotide (c-di-GMP or cGAMP)-binding, activation and translocation from the endoplasmic reticulum, STING1 is phosphorylated by TBK1 at Ser-365 in the pLxIS motif. The phosphorylated pLxIS motif constitutes an IRF3-binding motif, leading to recruitment of the transcription factor IRF3 to induce type-I interferons and other cytokines. Phosphorylated on tyrosine residues upon MHC-II aggregation. Dephosphorylation by PPP6C leads to inactivation and decreased production of IFN-beta. Phosphorylation at Ser-357 is also required to activate IRF3. Phosphorylation at Ser-354 by MAP3K7/TAK1 facilitates its interaction with STEEP1, promoting STING1 translocation to COPII vesicles. Post-translationally, ubiquitinated. Ubiquitinated via 'Lys-63'-linked ubiquitin chains in response to double-stranded DNA treatment, leading to relocalization to autophagosomes and subsequent degradation; this process is dependent on SQSTM1. 'Lys-63'-linked ubiquitination mediated by TRIM56 at Lys-150 promotes homodimerization and recruitment of the antiviral kinase TBK1 and subsequent production of IFN-beta. 'Lys-48'-linked polyubiquitination at Lys-150 occurring after viral infection is mediated by RNF5 and leads to proteasomal degradation. 'Lys-11'-linked polyubiquitination at Lys-150 by RNF26 leads to stabilize STING1: it protects STING1 from RNF5-mediated 'Lys-48'-linked polyubiquitination. 'Lys-33'-linked and 'Lys-48'-linked deubiquitinated by USP20; leading to its stabilization and promotion of innate antiviral response. 'Lys-48'-linked deubiquitinated by USP44; leading to its stabilization and promotion of innate antiviral response. 'Lys-63'-linked deubiquitinated by USP49; leading to inhibition of the subsequent recruitment of TBK1 to the signaling complex. 'Lys-63'-linked ubiquitination mediated by RNF39 promotes the activation of the cGAS-STING pathway. In terms of processing, palmitoylation takes place in the Golgi apparatus and creates a platform for the recruitment of TBK1.

The protein resides in the endoplasmic reticulum membrane. Its subcellular location is the cytoplasm. It localises to the perinuclear region. It is found in the endoplasmic reticulum-Golgi intermediate compartment membrane. The protein localises to the golgi apparatus membrane. The protein resides in the cytoplasmic vesicle. Its subcellular location is the autophagosome membrane. It localises to the mitochondrion outer membrane. It is found in the cell membrane. It catalyses the reaction H(+)(in) = H(+)(out). Its function is as follows. Facilitator of innate immune signaling that acts as a sensor of cytosolic DNA from bacteria and viruses and promotes the production of type I interferon (IFN-alpha and IFN-beta). Innate immune response is triggered in response to non-CpG double-stranded DNA from viruses and bacteria delivered to the cytoplasm. Acts by binding cyclic dinucleotides: recognizes and binds cyclic di-GMP (c-di-GMP), a second messenger produced by bacteria, cyclic UMP-AMP (2',3'-cUAMP), and cyclic GMP-AMP (cGAMP), a messenger produced by CGAS in response to DNA virus in the cytosol. Upon binding to c-di-GMP or cGAMP, STING oligomerizes, translocates from the endoplasmic reticulum and is phosphorylated by TBK1 on the pLxIS motif, leading to recruitment and subsequent activation of the transcription factor IRF3 to induce expression of type I interferon and exert a potent anti-viral state. Exhibits 2',3' phosphodiester linkage-specific ligand recognition: can bind both 2'-3' linked cGAMP (2'-3'-cGAMP) and 3'-3' linked cGAMP but is preferentially activated by 2'-3' linked cGAMP. The preference for 2'-3'-cGAMP, compared to other linkage isomers is probably due to the ligand itself, whichs adopts an organized free-ligand conformation that resembles the STING1-bound conformation and pays low energy costs in changing into the active conformation. In addition to promote the production of type I interferons, plays a direct role in autophagy. Following cGAMP-binding, STING1 buds from the endoplasmic reticulum into COPII vesicles, which then form the endoplasmic reticulum-Golgi intermediate compartment (ERGIC). The ERGIC serves as the membrane source for WIPI2 recruitment and LC3 lipidation, leading to formation of autophagosomes that target cytosolic DNA or DNA viruses for degradation by the lysosome. Promotes autophagy by acting as a proton channel that directs proton efflux from the Golgi to facilitate MAP1LC3B/LC3B lipidation. The autophagy- and interferon-inducing activities can be uncoupled and autophagy induction is independent of TBK1 phosphorylation. Autophagy is also triggered upon infection by bacteria: following c-di-GMP-binding, which is produced by live Gram-positive bacteria, promotes reticulophagy. May be involved in translocon function, the translocon possibly being able to influence the induction of type I interferons. May be involved in transduction of apoptotic signals via its association with the major histocompatibility complex class II (MHC-II). This is Stimulator of interferon genes protein from Bos taurus (Bovine).